We begin with the raw amino-acid sequence, 1026 residues long: Exportin-T (1026 aa).

Belongs to the exportin family.

It localises to the nucleus. It is found in the cytoplasm. In terms of biological role, tRNA nucleus export receptor which facilitates tRNA translocation across the nuclear pore complex. Involved in pre-tRNA splicing, probably by affecting the interaction of pre-tRNA with splicing endonuclease. The polypeptide is Exportin-T (los1) (Neurospora crassa (strain ATCC 24698 / 74-OR23-1A / CBS 708.71 / DSM 1257 / FGSC 987)).